A 177-amino-acid polypeptide reads, in one-letter code: Calerythrin (177 aa).

EF-hand domains lie at 5–40 (IASDRLKKRFDRWDFDGNGALERADFEKEAQHIAEA), 45–90 (AGAA…NLIF), 100–134 (VLGPVVKGTWGMCDKNADGQINADEFAAWLTALGM), and 134–169 (MSKAEAAEAFNQVDTNGNGELSLDELLTAVRDFHFG). Ca(2+)-binding residues include D18, D20, N22, and D29. Residues D113, N115, D117, Q119, E124, D147, N149, N151, E153, and E158 each coordinate Ca(2+).

This is Calerythrin from Saccharopolyspora erythraea (Streptomyces erythraeus).